A 157-amino-acid chain; its full sequence is MMLPDWKIEKEILIEPFSKESLQPAGYDLRVGKEAYVEGKLIDVEEAGNVIIPPKKHALILTLERVKLPDDVMGDMKIRSSLAREGILGSFAWVDPGWDGNLTLMLFNASNEPVVLEYGERFVQIAFIRLEEPAKRPYRGNYQGSRRIALSKRRVRK.

DCTP-binding positions include 79–84 (RSSLAR), Asp95, Gln124, and Tyr138.

Belongs to the dCTP deaminase family. As to quaternary structure, homotrimer.

The enzyme catalyses dCTP + H2O + H(+) = dUTP + NH4(+). It participates in pyrimidine metabolism; dUMP biosynthesis; dUMP from dCTP (dUTP route): step 1/2. Functionally, catalyzes the deamination of dCTP to dUTP. The chain is dCTP deaminase from Thermococcus gammatolerans (strain DSM 15229 / JCM 11827 / EJ3).